Consider the following 87-residue polypeptide: Elongation factor Ts, chloroplastic (87 aa).

The protein belongs to the EF-Ts family.

Its subcellular location is the plastid. The protein resides in the chloroplast. Associates with the EF-Tu.GDP complex and induces the exchange of GDP to GTP. It remains bound to the aminoacyl-tRNA.EF-Tu.GTP complex up to the GTP hydrolysis stage on the ribosome. The polypeptide is Elongation factor Ts, chloroplastic (tsf) (Antithamnion sp. (Red alga)).